Consider the following 233-residue polypeptide: Cysteine and histidine-rich domain-containing protein RAR1 (233 aa).

Residues 1–13 are compositionally biased toward low complexity; sequence MSTEAETTSAAAP. The interval 1–23 is disordered; the sequence is MSTEAETTSAAAPAPAPAPASAP. Zn(2+) is bound by residues Cys-26, Cys-31, Cys-45, His-48, Cys-63, Cys-64, Cys-80, and His-85. Residues 26-85 form the CHORD 1 domain; sequence CQRIGCDATFTDDNNPDGSCQYHPSGPMFHDGMKQWSCCKQKSHDFSLFLAIPGCKTGKH. The CCCH signature appears at 117–137; the sequence is CSRCRQGFFCSDHGSQPKAQI. Zn(2+)-binding residues include Cys-169, Cys-174, Cys-188, His-191, Cys-206, Cys-207, Cys-223, and His-228. The CHORD 2 domain occupies 169 to 228; sequence CKNKGCGKTYKEKDNHDEACDYHPGPAVFRDRIRGWKCCDIHVKEFDEFMEIPPCTKGWH.

As to quaternary structure, interacts (via CHORD2 domain) with SGT1 (via CS domain). Interacts with RAC1 and RACK1A.

It localises to the cytoplasm. It is found in the nucleus. Involved in basal disease resistance to virulent strain of bacterial blight (X.oryzae) and compatible race of rice blast fungus (M.grisea). May act as positive regulator of basal defense. Associates with HSP90 and is essential for the pathogen-associated molecular pattern (PAMP)-triggered immune responses specifically enhanced by RAC1. This chain is Cysteine and histidine-rich domain-containing protein RAR1 (RAR1), found in Oryza sativa subsp. japonica (Rice).